The following is a 556-amino-acid chain: MTMLKDPSKKYRAFPTIDLPDRTWPSKTIDAAPIWCSSDLRDGNQSLIEPMDAAKKLRFWKTLVSVGVKEIEASFPSASQTDFDFVRTLIEDGHIPDDTTIQVLTQAREDLIARTFESLRGAKKAIVHLYNATSPSFRRIVFNQDKAGVKEIAVNAAKLFVKYAAQQPETQWTFEYSPETFSATELEFAKEVCDAVIEVWNPTPENKVILNLPATVEVATPNIYADQIEWFGRNITRRDSVLISLHTHNDRGTGVAATELGLMAGADRVEGCLFGNGERTGNVDLVTVALNLYTQGIDPELDFSDIDGVRKVVEECNQIPVHPRHPYVGDLVHTAFSGSHQDAIRKGFTQQKDGELWEVPYLPIDPADIGRSYEAVIRVNSQSGKGGITYLLEQEYGISLPRRMQIEFSQVVQGETDRLGLEMSAQQIHSLLRREYLQANTPYALISHKLQEENGNSAVDAEVHVDGETQHWRGKGKGALEALVAGLPVAVEIMDYNEHAIGSGTTAKAAAYIELRVNGERAVHGVGIDENITTASFRALFSALNRSLSQTQAKAA.

The 275-residue stretch at 33-307 (PIWCSSDLRD…DPELDFSDID (275 aa)) folds into the Pyruvate carboxyltransferase domain. Residues D42, H246, H248, and N282 each coordinate Mg(2+). A regulatory domain region spans residues 439 to 556 (ANTPYALISH…SLSQTQAKAA (118 aa)).

The protein belongs to the alpha-IPM synthase/homocitrate synthase family. LeuA type 2 subfamily. In terms of assembly, homodimer. Mg(2+) serves as cofactor.

Its subcellular location is the cytoplasm. The catalysed reaction is 3-methyl-2-oxobutanoate + acetyl-CoA + H2O = (2S)-2-isopropylmalate + CoA + H(+). It participates in amino-acid biosynthesis; L-leucine biosynthesis; L-leucine from 3-methyl-2-oxobutanoate: step 1/4. In terms of biological role, catalyzes the condensation of the acetyl group of acetyl-CoA with 3-methyl-2-oxobutanoate (2-ketoisovalerate) to form 3-carboxy-3-hydroxy-4-methylpentanoate (2-isopropylmalate). The chain is 2-isopropylmalate synthase from Pseudomonas savastanoi pv. phaseolicola (strain 1448A / Race 6) (Pseudomonas syringae pv. phaseolicola (strain 1448A / Race 6)).